We begin with the raw amino-acid sequence, 46 residues long: uncharacterized protein (46 aa).

Residues 12 to 34 (HFNHFVIALSFIYGLTELGYLLL) traverse the membrane as a helical segment.

Its subcellular location is the cell membrane. This is an uncharacterized protein from Bacillus subtilis (strain 168).